A 286-amino-acid polypeptide reads, in one-letter code: E3 SUMO-protein ligase K-bZIP (286 aa).

Disordered regions lie at residues 1–22 (MPRM…EKDE) and 106–130 (WTLS…SKRR).

In terms of assembly, interacts with host HDAC1 and HDAC2, these interactions suppress HDAC activities. Interacts with protein ORF57. Interacts with protein vPK. In terms of processing, sumoylated.

Its pathway is protein modification; protein sumoylation. In terms of biological role, SUMO E3 ligase that plays a role in viral gene regulation and is essential for viral reactivation. Disrupts host G1 cell cycle control thus allowing viral transcription and translation to proceed at the early stages of infection. Catalyzes its own SUMO modification as well as that of its interacting partners such as host TP53 and RB1. Regulates viral gene expression and reactivation and may mediate the SUMOylation of viral promoters in the low methylated 'Lys-9' histone H3 (H3K9me) region which results in a diminution of viral gene expression after reactivation. SUMOylates also host histone lysine demethylase 4A/KDM4A, an essential step for complete enrichment of SUMO-2/3 on the viral genome during viral transactivation and reactivation. The chain is E3 SUMO-protein ligase K-bZIP (K8) from Human herpesvirus 8 type P (isolate GK18) (HHV-8).